The following is a 485-amino-acid chain: ATP synthase subunit beta 1 (485 aa).

ATP is bound at residue 157 to 164 (GGAGVGKT).

Belongs to the ATPase alpha/beta chains family. In terms of assembly, F-type ATPases have 2 components, CF(1) - the catalytic core - and CF(0) - the membrane proton channel. CF(1) has five subunits: alpha(3), beta(3), gamma(1), delta(1), epsilon(1). CF(0) has three main subunits: a(1), b(2) and c(9-12). The alpha and beta chains form an alternating ring which encloses part of the gamma chain. CF(1) is attached to CF(0) by a central stalk formed by the gamma and epsilon chains, while a peripheral stalk is formed by the delta and b chains.

It localises to the cell inner membrane. It catalyses the reaction ATP + H2O + 4 H(+)(in) = ADP + phosphate + 5 H(+)(out). In terms of biological role, produces ATP from ADP in the presence of a proton gradient across the membrane. The catalytic sites are hosted primarily by the beta subunits. The sequence is that of ATP synthase subunit beta 1 from Psychromonas ingrahamii (strain DSM 17664 / CCUG 51855 / 37).